The primary structure comprises 135 residues: MLSPKRTKFRKQHRNRMNGKASKGNTIAFGEYALQTLEPVWLTARQIEATRRTITRYVKRGGKIWIRVFPDKPITARPAETRMGSGKGATEYWVAVIKPGHILFEIAGVSKQTAQEAMKLASYKLPIKTKFITKQ.

The segment covering 1 to 17 (MLSPKRTKFRKQHRNRM) has biased composition (basic residues). Residues 1–22 (MLSPKRTKFRKQHRNRMNGKAS) form a disordered region.

The protein belongs to the universal ribosomal protein uL16 family. In terms of assembly, part of the 50S ribosomal subunit.

Its subcellular location is the plastid. It is found in the chloroplast. The chain is Large ribosomal subunit protein uL16c from Gracilaria tenuistipitata (Red alga).